Reading from the N-terminus, the 300-residue chain is Tyrosine recombinase XerC (300 aa).

The Core-binding (CB) domain occupies 2–88 (TQEGKLEQQF…SLRSFYTFLL (87 aa)). The Tyr recombinase domain maps to 109–294 (RLPKFFYSEE…TKEHLKSTYM (186 aa)). Catalysis depends on residues Arg-150, Lys-174, His-246, Arg-249, and His-272. The O-(3'-phospho-DNA)-tyrosine intermediate role is filled by Tyr-281.

This sequence belongs to the 'phage' integrase family. XerC subfamily. As to quaternary structure, forms a cyclic heterotetrameric complex composed of two molecules of XerC and two molecules of XerD.

Its subcellular location is the cytoplasm. In terms of biological role, site-specific tyrosine recombinase, which acts by catalyzing the cutting and rejoining of the recombining DNA molecules. The XerC-XerD complex is essential to convert dimers of the bacterial chromosome into monomers to permit their segregation at cell division. It also contributes to the segregational stability of plasmids. This Listeria monocytogenes serotype 4a (strain HCC23) protein is Tyrosine recombinase XerC.